A 134-amino-acid chain; its full sequence is Agouti-related protein (134 aa).

A signal peptide spans 1 to 20 (MLTAVLLSCALLLAMPPLQG). The propeptide occupies 21 to 84 (AQMGPAPLEG…VLDPEGRKPR (64 aa)). 5 disulfides stabilise this stretch: Cys-89–Cys-104, Cys-96–Cys-110, Cys-103–Cys-121, Cys-107–Cys-131, and Cys-112–Cys-119. Residues 89-131 (CVRLHESCLGHQVPCCDPCATCYCRFFNAFCYCRKLGTTTNPC) enclose the Agouti domain. Positions 113-115 (RFF) are interaction with melanocortin receptors.

In terms of assembly, interacts with melanocortin receptors MC3R, MC4R and MC5R.

It is found in the secreted. It localises to the golgi apparatus lumen. Plays a role in weight homeostasis. Involved in the control of feeding behavior through the central melanocortin system. Acts as alpha melanocyte-stimulating hormone antagonist by inhibiting cAMP production mediated by stimulation of melanocortin receptors within the hypothalamus and adrenal gland. Has very low activity with MC5R. Is an inverse agonist for MC3R and MC4R being able to suppress their constitutive activity. It promotes MC3R and MC4R endocytosis in an arrestin-dependent manner. The polypeptide is Agouti-related protein (AGRP) (Bos taurus (Bovine)).